Consider the following 315-residue polypeptide: Neuroguidin (315 aa).

N-acetylalanine is present on Ala-2. A coiled-coil region spans residues 5 to 42 (EVLESDLPNAVALLKNLQEQVMAVTAQVQTLTKKVQAK). Residues 41–174 (AKAYPTEKGL…KGTAKKYVPP (134 aa)) are necessary for interaction with EIF4E. Ser-121, Ser-142, and Ser-143 each carry phosphoserine. Residues 123 to 174 (SENDPLRFKPHPSNMMSKLSSEDEEEDEAEEGQSGASGKKSGKGTAKKYVPP) form a disordered region. Residues 144–153 (EDEEEDEAEE) are compositionally biased toward acidic residues. Residues 181-205 (YDETEAEREKKRLERAKRRALSSSV) are a coiled coil. 2 positions are modified to phosphoserine: Ser-204 and Ser-214. The interval 252–315 (SKREKGRRKR…RKKKGFRRRR (64 aa)) is disordered. Residues 264 to 276 (VMSSQLHSLTHFS) show a composition bias toward polar residues. Over residues 295-315 (TKKRKKIPKKGRKKKGFRRRR) the composition is skewed to basic residues.

The protein belongs to the SAS10 family. Part of the small subunit (SSU) processome, composed of more than 70 proteins and the RNA chaperone small nucleolar RNA (snoRNA) U3. Interacts with CPEB1 and EIF4E.

Its subcellular location is the nucleus. The protein localises to the nucleolus. It localises to the chromosome. The protein resides in the centromere. It is found in the cytoplasm. Its subcellular location is the cell projection. The protein localises to the axon. It localises to the dendrite. The protein resides in the filopodium. In terms of biological role, part of the small subunit (SSU) processome, first precursor of the small eukaryotic ribosomal subunit. During the assembly of the SSU processome in the nucleolus, many ribosome biogenesis factors, an RNA chaperone and ribosomal proteins associate with the nascent pre-rRNA and work in concert to generate RNA folding, modifications, rearrangements and cleavage as well as targeted degradation of pre-ribosomal RNA by the RNA exosome. Its dissociation from the complex determines the transition from state pre-A1 to state pre-A1*. Inhibits mRNA translation in a cytoplasmic polyadenylation element (CPE)-dependent manner. The sequence is that of Neuroguidin (NGDN) from Bos taurus (Bovine).